The sequence spans 406 residues: MDSKCQSIRSKTQPNLRCLFNAKNGNKYCPLHLIQNNIIDFNPKNEEFFSTVTDNNNEHLQNTINPIYKQISLDTINSIGIKTFVTKDLNKKDNGKDKTTGIKKKIKNSKSVSSKMLHEQKVTTIADSYQNTEDDLEMKLLILINNEENLEKISKLIGPAFNDLTLAEDNEDPVTYDQFWTVENGIKKPSGINRYFIFSYIDSNDKIRCFTIMSINDLISHNNLEHPITMEKIPEEDILRAIELIDFYKKEIGLFNSSNMEISREFQIKHKLSNLFKKFHVHSIYLEENWLLDITNLSNLDKIIHETNKLISNNLVSINPNLKTFDLFKKKFTVNSSKNKKILETDSNTTKETYIDAQWYIVEQWEKLIELADNTNNQIPIWVLILGLSYVVPEIKQKFPDLEIML.

This is an uncharacterized protein from Acanthamoeba polyphaga mimivirus (APMV).